The sequence spans 111 residues: Universal stress protein B (111 aa).

2 helical membrane-spanning segments follow: residues 1–21 (MIST…NMAR) and 90–110 (FILT…LMIW).

The protein belongs to the universal stress protein B family.

It is found in the cell inner membrane. The chain is Universal stress protein B from Escherichia coli O45:K1 (strain S88 / ExPEC).